The following is a 269-amino-acid chain: Small ribosomal subunit protein uS2 (269 aa).

A disordered region spans residues 224 to 269; it reads ANQGREDSEDVYSETENDTEETDEELVSEEDLKEFVENSEEESDEE. The span at 230–269 shows a compositional bias: acidic residues; that stretch reads DSEDVYSETENDTEETDEELVSEEDLKEFVENSEEESDEE.

Belongs to the universal ribosomal protein uS2 family.

This chain is Small ribosomal subunit protein uS2, found in Finegoldia magna (strain ATCC 29328 / DSM 20472 / WAL 2508) (Peptostreptococcus magnus).